We begin with the raw amino-acid sequence, 85 residues long: Large ribosomal subunit protein bL27 (85 aa).

Residues 1–10 (MAQKKGGGST) show a composition bias toward gly residues. Positions 1–21 (MAQKKGGGSTRNGRDSQPKML) are disordered.

It belongs to the bacterial ribosomal protein bL27 family.

The chain is Large ribosomal subunit protein bL27 from Polaromonas naphthalenivorans (strain CJ2).